The chain runs to 731 residues: RNA-binding protein RMD9-like, mitochondrial (731 aa).

Residues Met1 to Val10 are compositionally biased toward polar residues. Disordered stretches follow at residues Met1 to Thr29, Gly77 to Ile133, and Gln590 to Pro630. Over residues Asn83–His100 the composition is skewed to low complexity. The segment covering Asn101–Ser122 has biased composition (basic residues). Ser132 bears the Phosphoserine mark. Over residues Ser598–Pro617 the composition is skewed to polar residues.

This sequence belongs to the RMD9 family. As to quaternary structure, monomer. Phosphorylated. Phosphorylation promotes binding to RNA.

It is found in the mitochondrion inner membrane. Its function is as follows. May be involved in the processing or stability of mitochondrial mRNAs. The protein is RNA-binding protein RMD9-like, mitochondrial of Saccharomyces cerevisiae (strain ATCC 204508 / S288c) (Baker's yeast).